The primary structure comprises 661 residues: Polyadenylate-binding protein, cytoplasmic and nuclear (661 aa).

Polar residues predominate over residues 1–11; that stretch reads MSAAETNQVQE. Residues 1–61 are disordered; the sequence is MSAAETNQVQ…SAEEQGESSG (61 aa). Residues 20–51 show a composition bias toward low complexity; that stretch reads SSSSPAAGGATTATTTNNAESSDATSSSVPAD. 4 RRM domains span residues 67-145, 155-232, 248-325, and 351-428; these read ASLY…WSQR, GNIF…KHVS, TNIY…RAQK, and VNLF…LAQR. The disordered stretch occupies residues 473–563; sequence FPPNGRGNAP…PNRPAGGNVP (91 aa). Residues 501-511 are compositionally biased toward pro residues; that stretch reads EQWPRPGPNGQ. The segment covering 523-532 has biased composition (polar residues); the sequence is QDFNGQNMRP. Over residues 533–549 the composition is skewed to low complexity; that stretch reads QQQQQQQQQQQQQQQQQ. Residues 563-644 form the PABC domain; that stretch reads PAKDLAALIA…ALNAFEEYKN (82 aa).

The protein belongs to the polyadenylate-binding protein type-1 family.

It is found in the cytoplasm. Its subcellular location is the nucleus. Functionally, binds the poly(A) tail of mRNA. Appears to be an important mediator of the multiple roles of the poly(A) tail in mRNA biogenesis, stability and translation. In the nucleus, involved in both mRNA cleavage and polyadenylation. Is also required for efficient mRNA export to the cytoplasm. Acts in concert with a poly(A)-specific nuclease (PAN) to affect poly(A) tail shortening, which may occur concomitantly with either nucleocytoplasmic mRNA transport or translational initiation. In the cytoplasm, stimulates translation initiation and regulates mRNA decay through translation termination-coupled poly(A) shortening, probably mediated by PAN. In Lodderomyces elongisporus (strain ATCC 11503 / CBS 2605 / JCM 1781 / NBRC 1676 / NRRL YB-4239) (Yeast), this protein is Polyadenylate-binding protein, cytoplasmic and nuclear (PAB1).